The chain runs to 173 residues: Protein GrpE (173 aa).

Basic and acidic residues predominate over residues Met-1–Thr-20. Positions Met-1–Ser-23 are disordered.

The protein belongs to the GrpE family. As to quaternary structure, homodimer.

The protein localises to the cytoplasm. Functionally, participates actively in the response to hyperosmotic and heat shock by preventing the aggregation of stress-denatured proteins, in association with DnaK and GrpE. It is the nucleotide exchange factor for DnaK and may function as a thermosensor. Unfolded proteins bind initially to DnaJ; upon interaction with the DnaJ-bound protein, DnaK hydrolyzes its bound ATP, resulting in the formation of a stable complex. GrpE releases ADP from DnaK; ATP binding to DnaK triggers the release of the substrate protein, thus completing the reaction cycle. Several rounds of ATP-dependent interactions between DnaJ, DnaK and GrpE are required for fully efficient folding. In Thiobacillus denitrificans (strain ATCC 25259 / T1), this protein is Protein GrpE.